The primary structure comprises 148 residues: Tetratricopeptide repeat protein 32 (148 aa).

TPR repeat units follow at residues 12 to 45 (SSAA…CARH), 55 to 88 (ATAY…LPSF), and 89 to 122 (EVPY…NPGF).

In Mus musculus (Mouse), this protein is Tetratricopeptide repeat protein 32 (Ttc32).